A 169-amino-acid polypeptide reads, in one-letter code: 6,7-dimethyl-8-ribityllumazine synthase (169 aa).

5-amino-6-(D-ribitylamino)uracil-binding positions include Phe24, 58 to 60, and 82 to 84; these read ALE and AVV. Residue 87-88 participates in (2S)-2-hydroxy-3-oxobutyl phosphate binding; it reads ET. Residue His90 is the Proton donor of the active site. Asn115 is a binding site for 5-amino-6-(D-ribitylamino)uracil. Arg129 serves as a coordination point for (2S)-2-hydroxy-3-oxobutyl phosphate.

The protein belongs to the DMRL synthase family.

It carries out the reaction (2S)-2-hydroxy-3-oxobutyl phosphate + 5-amino-6-(D-ribitylamino)uracil = 6,7-dimethyl-8-(1-D-ribityl)lumazine + phosphate + 2 H2O + H(+). The protein operates within cofactor biosynthesis; riboflavin biosynthesis; riboflavin from 2-hydroxy-3-oxobutyl phosphate and 5-amino-6-(D-ribitylamino)uracil: step 1/2. In terms of biological role, catalyzes the formation of 6,7-dimethyl-8-ribityllumazine by condensation of 5-amino-6-(D-ribitylamino)uracil with 3,4-dihydroxy-2-butanone 4-phosphate. This is the penultimate step in the biosynthesis of riboflavin. The protein is 6,7-dimethyl-8-ribityllumazine synthase of Cupriavidus metallidurans (strain ATCC 43123 / DSM 2839 / NBRC 102507 / CH34) (Ralstonia metallidurans).